Reading from the N-terminus, the 694-residue chain is Elongation factor G (694 aa).

In terms of domain architecture, tr-type G spans Glu10–Val285. GTP contacts are provided by residues Ala19 to Thr26, Asp83 to His87, and Asn137 to Asp140.

This sequence belongs to the TRAFAC class translation factor GTPase superfamily. Classic translation factor GTPase family. EF-G/EF-2 subfamily.

It is found in the cytoplasm. Catalyzes the GTP-dependent ribosomal translocation step during translation elongation. During this step, the ribosome changes from the pre-translocational (PRE) to the post-translocational (POST) state as the newly formed A-site-bound peptidyl-tRNA and P-site-bound deacylated tRNA move to the P and E sites, respectively. Catalyzes the coordinated movement of the two tRNA molecules, the mRNA and conformational changes in the ribosome. The protein is Elongation factor G of Limosilactobacillus fermentum (strain NBRC 3956 / LMG 18251) (Lactobacillus fermentum).